Consider the following 260-residue polypeptide: NAD-capped RNA hydrolase NudC (260 aa).

Residue Arg-74 coordinates substrate. Cys-103, Cys-106, Cys-121, and Cys-124 together coordinate Zn(2+). A substrate-binding site is contributed by Tyr-129. Positions Pro-130–Thr-253 constitute a Nudix hydrolase domain. 3 residues coordinate a divalent metal cation: Ala-163, Glu-179, and Glu-183. Residues Gly-164–Gly-185 carry the Nudix box motif. A substrate-binding site is contributed by Gln-197–Ser-204. Glu-224 is an a divalent metal cation binding site. Ala-246 serves as a coordination point for substrate.

This sequence belongs to the Nudix hydrolase family. NudC subfamily. Homodimer. Mg(2+) serves as cofactor. The cofactor is Mn(2+). It depends on Zn(2+) as a cofactor.

The enzyme catalyses a 5'-end NAD(+)-phospho-ribonucleoside in mRNA + H2O = a 5'-end phospho-adenosine-phospho-ribonucleoside in mRNA + beta-nicotinamide D-ribonucleotide + 2 H(+). It carries out the reaction NAD(+) + H2O = beta-nicotinamide D-ribonucleotide + AMP + 2 H(+). The catalysed reaction is NADH + H2O = reduced beta-nicotinamide D-ribonucleotide + AMP + 2 H(+). Its function is as follows. mRNA decapping enzyme that specifically removes the nicotinamide adenine dinucleotide (NAD) cap from a subset of mRNAs by hydrolyzing the diphosphate linkage to produce nicotinamide mononucleotide (NMN) and 5' monophosphate mRNA. The NAD-cap is present at the 5'-end of some mRNAs and stabilizes RNA against 5'-processing. Has preference for mRNAs with a 5'-end purine. Catalyzes the hydrolysis of a broad range of dinucleotide pyrophosphates. This chain is NAD-capped RNA hydrolase NudC, found in Vibrio parahaemolyticus serotype O3:K6 (strain RIMD 2210633).